Reading from the N-terminus, the 159-residue chain is 2-C-methyl-D-erythritol 2,4-cyclodiphosphate synthase (159 aa).

The a divalent metal cation site is built by D8 and H10. 4-CDP-2-C-methyl-D-erythritol 2-phosphate is bound by residues 8-10 and 34-35; these read DSH and HS. An a divalent metal cation-binding site is contributed by H42. Residues 56 to 58, 61 to 65, F139, and R142 contribute to the 4-CDP-2-C-methyl-D-erythritol 2-phosphate site; these read DIG and FPDSD.

Belongs to the IspF family. Homotrimer. It depends on a divalent metal cation as a cofactor.

It catalyses the reaction 4-CDP-2-C-methyl-D-erythritol 2-phosphate = 2-C-methyl-D-erythritol 2,4-cyclic diphosphate + CMP. It participates in isoprenoid biosynthesis; isopentenyl diphosphate biosynthesis via DXP pathway; isopentenyl diphosphate from 1-deoxy-D-xylulose 5-phosphate: step 4/6. Functionally, involved in the biosynthesis of isopentenyl diphosphate (IPP) and dimethylallyl diphosphate (DMAPP), two major building blocks of isoprenoid compounds. Catalyzes the conversion of 4-diphosphocytidyl-2-C-methyl-D-erythritol 2-phosphate (CDP-ME2P) to 2-C-methyl-D-erythritol 2,4-cyclodiphosphate (ME-CPP) with a corresponding release of cytidine 5-monophosphate (CMP). This chain is 2-C-methyl-D-erythritol 2,4-cyclodiphosphate synthase, found in Syntrophus aciditrophicus (strain SB).